Here is a 244-residue protein sequence, read N- to C-terminus: tRNA pseudouridine synthase A (244 aa).

Asp52 serves as the catalytic Nucleophile. Tyr110 is a binding site for substrate.

Belongs to the tRNA pseudouridine synthase TruA family. In terms of assembly, homodimer.

It carries out the reaction uridine(38/39/40) in tRNA = pseudouridine(38/39/40) in tRNA. Functionally, formation of pseudouridine at positions 38, 39 and 40 in the anticodon stem and loop of transfer RNAs. This chain is tRNA pseudouridine synthase A, found in Thermoanaerobacter pseudethanolicus (strain ATCC 33223 / 39E) (Clostridium thermohydrosulfuricum).